Here is a 591-residue protein sequence, read N- to C-terminus: Heterogeneous nuclear ribonucleoprotein L-like (591 aa).

Positions 1 to 120 (MSSSSSSSPK…STEGGGSHHK (120 aa)) are disordered. Residues 20–31 (FESQAKRLKTEE) are compositionally biased toward basic and acidic residues. Residue Lys-28 forms a Glycyl lysine isopeptide (Lys-Gly) (interchain with G-Cter in SUMO2) linkage. Position 37 is a phosphoserine (Ser-37). At Thr-48 the chain carries Phosphothreonine. A compositionally biased stretch (gly residues) spans 57 to 73 (SGGGDGGDGDGGSGGGG). Acidic residues predominate over residues 74-91 (DGEEGEGGEEGDEGDGDE). Residues 92 to 105 (GGSGGDEGGSGGGP) are compositionally biased toward gly residues. A phosphoserine mark is found at Ser-107, Ser-117, and Ser-124. 3 consecutive RRM domains span residues 125–199 (PVVH…YSTS), 215–293 (NKVL…YARP), and 384–458 (SVVM…VSKQ). Lys-540 is covalently cross-linked (Glycyl lysine isopeptide (Lys-Gly) (interchain with G-Cter in SUMO2)).

In terms of assembly, interacts with HNRNPL.

In terms of biological role, RNA-binding protein that functions as a regulator of alternative splicing for multiple target mRNAs, including PTPRC/CD45 and STAT5A. Required for alternative splicing of PTPRC. This Mus musculus (Mouse) protein is Heterogeneous nuclear ribonucleoprotein L-like (Hnrnpll).